Here is a 245-residue protein sequence, read N- to C-terminus: 4-hydroxy-tetrahydrodipicolinate reductase (245 aa).

Residues 7 to 12 (GAKGKV), 75 to 77 (GTT), and 102 to 105 (APNF) each bind NAD(+). The active-site Proton donor/acceptor is the H132. Position 133 (H133) interacts with (S)-2,3,4,5-tetrahydrodipicolinate. K136 functions as the Proton donor in the catalytic mechanism. Position 142-143 (142-143 (GT)) interacts with (S)-2,3,4,5-tetrahydrodipicolinate.

The protein belongs to the DapB family.

The protein localises to the cytoplasm. It catalyses the reaction (S)-2,3,4,5-tetrahydrodipicolinate + NAD(+) + H2O = (2S,4S)-4-hydroxy-2,3,4,5-tetrahydrodipicolinate + NADH + H(+). The catalysed reaction is (S)-2,3,4,5-tetrahydrodipicolinate + NADP(+) + H2O = (2S,4S)-4-hydroxy-2,3,4,5-tetrahydrodipicolinate + NADPH + H(+). Its pathway is amino-acid biosynthesis; L-lysine biosynthesis via DAP pathway; (S)-tetrahydrodipicolinate from L-aspartate: step 4/4. Functionally, catalyzes the conversion of 4-hydroxy-tetrahydrodipicolinate (HTPA) to tetrahydrodipicolinate. This chain is 4-hydroxy-tetrahydrodipicolinate reductase, found in Mycobacterium marinum (strain ATCC BAA-535 / M).